We begin with the raw amino-acid sequence, 209 residues long: Uracil phosphoribosyltransferase (209 aa).

Residues Arg79, Arg104, and 131–139 (DPMLATGGS) contribute to the 5-phospho-alpha-D-ribose 1-diphosphate site. Uracil-binding positions include Ile194 and 199–201 (GDA). Position 200 (Asp200) interacts with 5-phospho-alpha-D-ribose 1-diphosphate.

It belongs to the UPRTase family. Mg(2+) is required as a cofactor.

The catalysed reaction is UMP + diphosphate = 5-phospho-alpha-D-ribose 1-diphosphate + uracil. The protein operates within pyrimidine metabolism; UMP biosynthesis via salvage pathway; UMP from uracil: step 1/1. Allosterically activated by GTP. Catalyzes the conversion of uracil and 5-phospho-alpha-D-ribose 1-diphosphate (PRPP) to UMP and diphosphate. This chain is Uracil phosphoribosyltransferase, found in Geobacter sp. (strain M21).